The sequence spans 248 residues: 2,3-bisphosphoglycerate-dependent phosphoglycerate mutase (248 aa).

Residues 8–15, 21–22, Arg60, 87–90, Lys98, and 114–115 each bind substrate; these read RHGESVWN, TG, ERHY, and RR. The active-site Tele-phosphohistidine intermediate is the His9. Catalysis depends on Glu87, which acts as the Proton donor/acceptor. Positions 116 to 135 are disordered; that stretch reads SYDTPPPPMEVSDPRHPSHD. Residue 183-184 participates in substrate binding; that stretch reads GN.

Belongs to the phosphoglycerate mutase family. BPG-dependent PGAM subfamily. Homodimer.

It carries out the reaction (2R)-2-phosphoglycerate = (2R)-3-phosphoglycerate. It participates in carbohydrate degradation; glycolysis; pyruvate from D-glyceraldehyde 3-phosphate: step 3/5. In terms of biological role, catalyzes the interconversion of 2-phosphoglycerate and 3-phosphoglycerate. In Bdellovibrio bacteriovorus (strain ATCC 15356 / DSM 50701 / NCIMB 9529 / HD100), this protein is 2,3-bisphosphoglycerate-dependent phosphoglycerate mutase.